A 34-amino-acid polypeptide reads, in one-letter code: DDIT3 upstream open reading frame protein (34 aa).

As to quaternary structure, interacts with DDIT3 (isoform 1).

It localises to the nucleus. The protein localises to the cytoplasm. Product of the upstream open reading frame (uORF) of DDIT3/CHOP that is specifically produced in absence of stress, thereby preventing translation of downstream stress effector DDIT3/CHOP. This Mus musculus (Mouse) protein is DDIT3 upstream open reading frame protein.